Here is a 303-residue protein sequence, read N- to C-terminus: Pyridoxal 5'-phosphate synthase subunit PdxS (303 aa).

D33 is a binding site for D-ribose 5-phosphate. K90 (schiff-base intermediate with D-ribose 5-phosphate) is an active-site residue. G162 lines the D-ribose 5-phosphate pocket. R174 is a binding site for D-glyceraldehyde 3-phosphate. D-ribose 5-phosphate is bound by residues G223 and 244 to 245; that span reads GS.

The protein belongs to the PdxS/SNZ family. In terms of assembly, in the presence of PdxT, forms a dodecamer of heterodimers.

The catalysed reaction is aldehydo-D-ribose 5-phosphate + D-glyceraldehyde 3-phosphate + L-glutamine = pyridoxal 5'-phosphate + L-glutamate + phosphate + 3 H2O + H(+). It functions in the pathway cofactor biosynthesis; pyridoxal 5'-phosphate biosynthesis. Its function is as follows. Catalyzes the formation of pyridoxal 5'-phosphate from ribose 5-phosphate (RBP), glyceraldehyde 3-phosphate (G3P) and ammonia. The ammonia is provided by the PdxT subunit. Can also use ribulose 5-phosphate and dihydroxyacetone phosphate as substrates, resulting from enzyme-catalyzed isomerization of RBP and G3P, respectively. The protein is Pyridoxal 5'-phosphate synthase subunit PdxS of Streptomyces coelicolor (strain ATCC BAA-471 / A3(2) / M145).